A 382-amino-acid polypeptide reads, in one-letter code: D-alanine--D-alanine ligase (382 aa).

One can recognise an ATP-grasp domain in the interval 139–348 (KRLMRDAGLP…PPALMDALIA (210 aa)). 168-223 (EALESRTLFVKPANMGSSVGVSRVADAGQFDQALAHAFAYDEKILIERAVPRAREI) contributes to the ATP binding site. Mg(2+)-binding residues include Asp300, Glu315, and Asn317.

Belongs to the D-alanine--D-alanine ligase family. Mg(2+) serves as cofactor. Requires Mn(2+) as cofactor.

Its subcellular location is the cytoplasm. The catalysed reaction is 2 D-alanine + ATP = D-alanyl-D-alanine + ADP + phosphate + H(+). It functions in the pathway cell wall biogenesis; peptidoglycan biosynthesis. Its function is as follows. Cell wall formation. The protein is D-alanine--D-alanine ligase of Methylobacterium sp. (strain 4-46).